The primary structure comprises 315 residues: Ninja-family protein 1 (315 aa).

Disordered regions lie at residues M1–A28, S68–P142, and D156–L237. Residues E99–S108 show a composition bias toward basic and acidic residues. Over residues D156 to E166 the composition is skewed to polar residues. Low complexity-rich tracts occupy residues S184–S197 and L221–T234.

The protein belongs to the Ninja family.

The protein localises to the nucleus. In Triticum aestivum (Wheat), this protein is Ninja-family protein 1 (AFP-A1).